The following is a 630-amino-acid chain: Probable potassium transport system protein Kup (630 aa).

Transmembrane regions (helical) follow at residues 17-37 (LAIAAIGVVFGDIGTSPLYSL), 51-71 (PSAILGVISLLFWAIILVVGI), 105-125 (ITGLMMALGIFGACMFYGDAV), 144-164 (PQLSHLVLPITIVILIALFWI), 175-195 (LFGPIMVLWFVTIAVLGIYHI), 218-238 (VLLAYVVLGSVVLVLTGAEAL), 255-275 (YVLVMPSLVLNYFGQGALLLL), 283-303 (PFFLLAPQWAALPLVVLSTVA), 344-364 (IYVPVVNWLLLFVILCIVIGF), 374-394 (YGIAVTATMVITTILAAVVMV), 402-422 (LLVAMIIGVFLVIDLGFFGAN), and 428-448 (QGGWLPLGIGALLFFLLMTWY).

The protein belongs to the HAK/KUP transporter (TC 2.A.72) family.

Its subcellular location is the cell inner membrane. The enzyme catalyses K(+)(in) + H(+)(in) = K(+)(out) + H(+)(out). In terms of biological role, transport of potassium into the cell. Likely operates as a K(+):H(+) symporter. This chain is Probable potassium transport system protein Kup, found in Burkholderia pseudomallei (strain K96243).